Consider the following 480-residue polypeptide: Sensor histidine kinase CusS (480 aa).

The Cytoplasmic segment spans residues 1–15 (MVSKPFQRPFSLATR). A helical membrane pass occupies residues 16-36 (LTFFISLATIAAFFAFAWIMI). Topologically, residues 37–186 (HSVKVHFAEQ…LHYINDLMNK (150 aa)) are periplasmic. A helical membrane pass occupies residues 187–207 (LIMTASVISILIVFIVLLAVH). The region spanning 207–260 (HKGHAPIRSVSRQIQNITSKDLDVRLDPQTVPIELEQLVLSFNHMIERIEDVFT) is the HAMP domain. Topologically, residues 208–480 (KGHAPIRSVS…GTRFVIILPA (273 aa)) are cytoplasmic. Positions 268–480 (DIAHEIRTPI…GTRFVIILPA (213 aa)) constitute a Histidine kinase domain. His271 bears the Phosphohistidine; by autocatalysis mark.

Autophosphorylated.

It is found in the cell inner membrane. It catalyses the reaction ATP + protein L-histidine = ADP + protein N-phospho-L-histidine.. Its function is as follows. Member of the two-component regulatory system CusS/CusR involved in response to copper and silver. Acts as a copper/silver ion sensor. Activates CusR by phosphorylation. The chain is Sensor histidine kinase CusS (cusS) from Escherichia coli O6:H1 (strain CFT073 / ATCC 700928 / UPEC).